The following is a 208-amino-acid chain: Large ribosomal subunit protein uL4 (208 aa).

The tract at residues 44–89 (RRQGTHKAKNRSEVRGGGRKPYRQKGTGHARQGSTRSPLMTGGGTI) is disordered. The span at 60 to 71 (GGRKPYRQKGTG) shows a compositional bias: basic residues.

It belongs to the universal ribosomal protein uL4 family. As to quaternary structure, part of the 50S ribosomal subunit.

Its function is as follows. One of the primary rRNA binding proteins, this protein initially binds near the 5'-end of the 23S rRNA. It is important during the early stages of 50S assembly. It makes multiple contacts with different domains of the 23S rRNA in the assembled 50S subunit and ribosome. Functionally, forms part of the polypeptide exit tunnel. In Chlorobium phaeobacteroides (strain BS1), this protein is Large ribosomal subunit protein uL4.